A 1881-amino-acid chain; its full sequence is MAGLQLMTPASSPMGPFFGLPWQQEAIHDNIYTPRKYQVELLEAALDHNIIVCLNSGSGKTFIAVLLSKELSYQIRGDFSKNAKRTVFLVNSEKQVSQQVSAVRTHTDLKVGEYSDLQKTQCWAKEKWYQEFQTHQVLVMTCHIFLNVLKTGNVSLSNINLLVFDECHLAIQDHPYRDIMKICESCQTCPRILGLTASILNGKCDPHDLEEKIQNLEEILRSNAETATDLVVLDRYASQPCEIVLDCGPYVDRSGLYQRLLNELDEALNFLTDCNISTHSKERDSTIISKQILSDCWAVLLVLGPWCADKVAGMMVRELQKYIKHEQEELHRKFLLFTDTILRKIHALCEEHFSPASLDMKFVTPKVIKLLEILRKYKPYERQQFESVEWYNNRNQDNYVSWSDSEDDDDDEDEEIEEKEKTETSFPSPFTNILCGIIFVERRYTAVVLNRLIKEAGKQDPELAYISSNFITGHGIGKNQPRNKQMEVEFRKQEEVLRKFRAHETNLLIATSIVEEGVDIPKCNLVVRFDLPSEYRSYVQSKGRARAPISNYIMLADSDKIKAFEEDLKTYKAIEKILRNKCSKSMDCGNTESEPIVDDDEIFPPYVLRQDDGSPRVTINTAIGHINRYCARLPSDPFTHLAPKCRTRELPDGPYRSTLYLPINSPLRAPIVGPPMNCARLAERAVALICCKKLHEIGELDDHLMPVGKETVKYEEELDLHDEEETSVPGRPGSTKRRQCYPKAIPECLRNSYPKPGQPCYLYVIGMVLTTPLPDELNFRRRKLYPPEDTTRCFGILTAKPIPQIPHFPVYTRSGEVTISIELKKSGFSLNLEQLELITRLHRYIFSHILRLEKPALEFKPTVADCAYCVLPLNVVNDSGTLDIDFKFVEDIEKSEARTGIPNTQYSAEGPFIFKLEDYQDAVIIPRYRNFDQPHRFYVADVYTDLTPLSKFPSPEYETFAEYYKTKYNLDLTNLNQPLLDVDHTSSRLNLLTPRHLNQKGKALPLSSAEKRKAKWESLQNKQILVPELCAIHPVPASLWRKAVCLPSILYRLHCLLTAEELRAQTAIDAGVGVKSLPEDFRYPNLDFGWKRSIDGKTFISNQSFSAMERESDCRLDITTVPDSATSSAAHHVMYTQMNDQMSVNCTPPCPKSLSDLQGVCFSDDCKAINGITCNGLTNGNWEAESGVCFQKDELIACKQEIPEKSTSFHVQNLPNDNQPILNECTLSKKFLDGNVGKPISDECPSTCTSDINYESGLSSGYSSKTLGPNPGLILQALTLSNASDGFNLERLEMLGDSFLKHAITTYLFCTYPDSHEGRLSYMRSKKVSNCNLYRLGKKKGSPSRMVVSIFDPPVNWLPPGYIVNQDKNCDKWESNETSGESVMANGKIDEDFEDEEDEDLMWRNPKEETDFDDDFLEYDQEHIKFIDNMLMGSGAFVKKIQLSAFAPPDQNYEWRPPKKPPLESAPFRSEFDDFDYSSWDAMCYLDPSKAVEEDDFVVGFWNPSEENGGADAGKQSISYDLHTEQCIADKSIADCVEALLGCYLTSCGERAAQLFLCSLGLKVLPEVRKPVTNTSTRGNYSLDGRTNSELSCKGIEYGYLKIPPRCMFEHPEAEKTLDHLISGFENFEKKINYQFKNKAYLLQAFTHASYHYNTITDCYQRLEFLGDAILDYLITKHLYEDPRQHSPGVLTDLRSALVNNTIFASLAVKYDYHKYFKAISPELFHVIDDFVQFQLEKNEMQGMDSELRRSEEDEEKEEDIEVPKAMGDIFESLAGAIYMDSGMSLETVWRVYYPMMQPLIEKFSANVPRSPVRELLEMEPETAKFSPAERTYDGKVRVMVEVVGKGKFKGVGRSYRIAKSAAARRALRSLKANQSQVPNS.

The region spanning 41–217 (LLEAALDHNI…DLEEKIQNLE (177 aa)) is the Helicase ATP-binding domain. Residue 54–61 (LNSGSGKT) participates in ATP binding. Positions 165–168 (DECH) match the DECH box motif. A Helicase C-terminal domain is found at 425-594 (SFPSPFTNIL…SMDCGNTESE (170 aa)). The region spanning 622–714 (AIGHINRYCA…MPVGKETVKY (93 aa)) is the Dicer dsRNA-binding fold domain. In terms of domain architecture, PAZ spans 887–1034 (KFVEDIEKSE…LVPELCAIHP (148 aa)). RNase III domains are found at residues 1249-1380 (TSDI…ETSG) and 1625-1783 (FENF…MDSG). Mg(2+) contacts are provided by Glu-1293, Asp-1371, Glu-1374, Glu-1664, Asp-1769, and Glu-1772. In terms of domain architecture, DRBM spans 1808–1873 (VPRSPVRELL…ARRALRSLKA (66 aa)).

This sequence belongs to the helicase family. Dicer subfamily. Component of the RISC loading complex (RLC), or micro-RNA (miRNA) loading complex (miRLC), which is composed of dicer1, ago2 and tarbp2; dicer1 and tarbp2 are required to process precursor miRNAs (pre-miRNAs) to mature miRNAs and then load them onto ago2. Note that the trimeric RLC/miRLC is also referred to as RISC. Mg(2+) serves as cofactor. Requires Mn(2+) as cofactor.

The protein resides in the cytoplasm. The catalysed reaction is Endonucleolytic cleavage to 5'-phosphomonoester.. Functionally, double-stranded RNA (dsRNA) endoribonuclease playing a central role in short dsRNA-mediated post-transcriptional gene silencing. Cleaves naturally occurring long dsRNAs and short hairpin pre-microRNAs (miRNA) into fragments of twenty-one to twenty-three nucleotides with 3' overhang of two nucleotides, producing respectively short interfering RNAs (siRNA) and mature microRNAs. SiRNAs and miRNAs serve as guide to direct the RNA-induced silencing complex (RISC) to complementary RNAs to degrade them or prevent their translation. Gene silencing mediated by siRNAs, also called RNA interference, controls the elimination of transcripts from mobile and repetitive DNA elements of the genome but also the degradation of exogenous RNA of viral origin for instance. The miRNA pathway on the other side is a mean to specifically regulate the expression of target genes. During embryonic development, at the left-right organizer, post-transcriptionally regulates the expression of dand5 in flow sensor cells. In post-flow stages, acts along with Bicc1 to repress dand5 mRNA translation and decay. Decreased Dand5 expression lifts repression of Nodal and defines leftness by induction of the lateral plate mesoderm Nodal signaling cascade. This chain is Endoribonuclease Dicer-S (dicer1.S), found in Xenopus laevis (African clawed frog).